Here is a 284-residue protein sequence, read N- to C-terminus: ATP synthase subunit a (284 aa).

Helical transmembrane passes span 55 to 75 (AIHV…LGLF), 116 to 136 (IAPL…LKLI), 165 to 185 (FGMS…VKGV), 196 to 216 (PFNH…ALII), 234 to 254 (VVFI…NVPW), and 255 to 275 (AIFH…LTVV).

This sequence belongs to the ATPase A chain family. F-type ATPases have 2 components, CF(1) - the catalytic core - and CF(0) - the membrane proton channel. CF(1) has five subunits: alpha(3), beta(3), gamma(1), delta(1), epsilon(1). CF(0) has three main subunits: a(1), b(2) and c(9-12). The alpha and beta chains form an alternating ring which encloses part of the gamma chain. CF(1) is attached to CF(0) by a central stalk formed by the gamma and epsilon chains, while a peripheral stalk is formed by the delta and b chains.

The protein localises to the cell inner membrane. Key component of the proton channel; it plays a direct role in the translocation of protons across the membrane. In Marinobacter nauticus (strain ATCC 700491 / DSM 11845 / VT8) (Marinobacter aquaeolei), this protein is ATP synthase subunit a.